We begin with the raw amino-acid sequence, 480 residues long: UDP-glycosyltransferase 72B1 (480 aa).

The active-site Proton acceptor is the His-19. Asp-117 acts as the Charge relay in catalysis. 4 residues coordinate UDP: Ser-277, Trp-346, Ala-347, and His-364. Residues Ser-277, Trp-346, Ala-347, His-364, Trp-367, Asn-368, Ser-369, Glu-372, Tyr-386, Glu-388, and Gln-389 each contribute to the UDP-alpha-D-glucose site. Residues Asn-368, Ser-369, Glu-372, and Tyr-386 each contribute to the UDP site.

It belongs to the UDP-glycosyltransferase family.

The catalysed reaction is hydroquinone + UDP-alpha-D-glucose = hydroquinone O-beta-D-glucopyranoside + UDP + H(+). Functionally, bifunctional O-glycosyltransferase and N-glycosyltransferase that can detoxify xenobiotics. Possesses high activity to metabolize the persistent pollutants 2,4,5-trichlorophenol (TCP) and 3,4-dichloroaniline (DCA). Also active on benzoates and benzoate derivatives in vitro. The protein is UDP-glycosyltransferase 72B1 (UGT72B1) of Arabidopsis thaliana (Mouse-ear cress).